A 157-amino-acid chain; its full sequence is Transcription elongation factor GreA (157 aa).

It belongs to the GreA/GreB family.

Its function is as follows. Necessary for efficient RNA polymerase transcription elongation past template-encoded arresting sites. The arresting sites in DNA have the property of trapping a certain fraction of elongating RNA polymerases that pass through, resulting in locked ternary complexes. Cleavage of the nascent transcript by cleavage factors such as GreA or GreB allows the resumption of elongation from the new 3'terminus. GreA releases sequences of 2 to 3 nucleotides. The sequence is that of Transcription elongation factor GreA from Chelativorans sp. (strain BNC1).